The chain runs to 292 residues: 2-(5''-triphosphoribosyl)-3'-dephosphocoenzyme-A synthase (292 aa).

The protein belongs to the CitG/MdcB family.

It catalyses the reaction 3'-dephospho-CoA + ATP = 2'-(5''-triphospho-alpha-D-ribosyl)-3'-dephospho-CoA + adenine. Functionally, catalyzes the formation of 2-(5''-triphosphoribosyl)-3'-dephosphocoenzyme-A, the precursor of the prosthetic group of the holo-acyl carrier protein (gamma chain) of citrate lyase, from ATP and dephospho-CoA. The sequence is that of 2-(5''-triphosphoribosyl)-3'-dephosphocoenzyme-A synthase from Escherichia coli (strain UTI89 / UPEC).